Consider the following 141-residue polypeptide: Subtilase cytotoxin subunit B (141 aa).

Positions 1–23 (MTIKRFFVCAGIMGCLSLNPAMA) are cleaved as a signal peptide. Residues 33–35 (MFS) and Gln59 contribute to the N-glycoloyl-alpha-neuraminate site. A hydrophobic patch important for binding to SubA region spans residues 89 to 94 (YFYTTG). Tyr101 is a binding site for N-glycoloyl-alpha-neuraminate.

As to quaternary structure, forms a complex with SubA with the stoichiometry SubA1:SubB5 (called SubAB5). Each SubB subunit makes different contacts with the single SubA subunit. This subunit alone forms pentamers.

The protein localises to the secreted. It is found in the host cytoplasm. Its subcellular location is the host cytosol. The protein resides in the host endoplasmic reticulum lumen. In terms of biological role, receptor-binding subunit of subtilase cytotoxin SubAB5. Required for receptor-binding and thus correct trafficking in the host cell. Has specificity for host glycans terminating in the sialic acid N-glycolyl-alpha-neuraminic acid (Neu5Gc); each subunit in the SubB pentamer binds one Neu5Gc. The protease subunit (SubA) cleaves host BiP/HSPA5, inducing the host endoplasmic reticulum stress response and eventual cell death. Culture supernatant of E.coli expressing both subA and subB are toxic for Vero cells (African green monkey kidney cell line), Chinese hamster ovary cells and Hct-8 cells (human colonic epithelial cell line); the subunits are not toxic individually. Purified SubAB5 is highly toxic, &lt;0.1 pg is able to kill at least 50% of 30'000 Vero cells in a microtiter plate assay after 3 days; no cytotoxicity is seen at 24 hours. Preabsorption with cells expressing a ganglioside GM2 mimic reduced cytotoxicity of SubAB5 by 93% in the Vero cytotoxicity assay. Intraperitoneal injection of 200 ng of purified SubAB5 kills mice; the higher the dose the faster the mice die. Animals injected with purified SubAB5 have microvascular thrombi in the brain and other organs, including the renal tubules and glomeruli. Mice fed E.coli cells expressing cloned SubAB5 experience drastic weight loss and appear ill and lethargic. SubB alone at 2.5 ug/ml causes vacuolation of Vero cells, which requires the V-type ATPase proton pump; treated cells die. Protein synthesis in Vero cells is transiently inhibited by SubAB5; both subunits are required for this effect. Inhibition of protein synthesis is prevented by brefeldin A; cells are arrested in the G1 phase. SubAB5 at 100 ng/ml induced caspase-dependent apoptosis in Vero cells through mitochondrial membrane damage. This chain is Subtilase cytotoxin subunit B, found in Escherichia coli.